A 772-amino-acid polypeptide reads, in one-letter code: Annulin (772 aa).

2 S-palmitoyl cysteine lipidation sites follow: cysteine 4 and cysteine 5. The tract at residues 15–57 is disordered; that stretch reads NEGSGGGIPLMPVRGGSTRRPDSLPKPPAAVVPSPPSPGDVPD. Over residues 38–53 the composition is skewed to pro residues; it reads LPKPPAAVVPSPPSPG. Active-site residues include histidine 400 and aspartate 427. The Ca(2+) site is built by asparagine 467, aspartate 469, glutamate 517, and glutamate 522.

It belongs to the transglutaminase superfamily. Transglutaminase family. The cofactor is Ca(2+). In terms of tissue distribution, has an annular, or ring-like expression pattern in epithelial annuli of developing limb segment boundary cells. In embryos, it is seen in gastrulating cells, in cells surrounding rapidly dividing neuroblasts, and in muscle pioneer cells invaginating to form apodemes.

It localises to the cell membrane. It catalyses the reaction L-glutaminyl-[protein] + L-lysyl-[protein] = [protein]-L-lysyl-N(6)-5-L-glutamyl-[protein] + NH4(+). Functionally, participates in morphogenetic activities of the cells, maybe by stabilizing the membrane or subcortical structures of cells that are under mechanical stress. Probably catalyzes the cross-linking of proteins and the conjugation of polyamines to proteins. The protein is Annulin of Schistocerca americana (American grasshopper).